Consider the following 158-residue polypeptide: C-type lectin BfL-2 (158 aa).

The signal sequence occupies residues 1–21 (MGHFTFIGLCLLAMFLSLSGA). 4 cysteine pairs are disulfide-bonded: C26–C37, C54–C154, C61–C156, and C129–C146. Residues 33-155 (KNGLCYKVFS…CETLHPFICQ (123 aa)) enclose the C-type lectin domain. The short motif at 119–121 (EPN) is the Mannose-binding element. An N-linked (GlcNAc...) asparagine glycan is attached at N121. The Ca(2+) site is built by E127, N142, and D143.

This sequence belongs to the true venom lectin family. As to quaternary structure, homodimer; non-covalently linked. In terms of tissue distribution, expressed by the venom gland.

It is found in the secreted. In terms of biological role, mannose-binding lectin which recognizes specific carbohydrate structures and agglutinates a variety of animal cells by binding to cell-surface glycoproteins and glycolipids. May be a calcium-dependent lectin. This Bungarus fasciatus (Banded krait) protein is C-type lectin BfL-2.